Consider the following 186-residue polypeptide: MGGSVSPPGTGEGTLQYSLIMEHLVGDKRRPKEVIPGGLGGIPTPIKSEEQKMMERVMESCGFKAALACVGGFVLGGAFGVFTAGIDTNVGFDPKDPYRTPTAKEVLKDMGQRGMSYAKNFAIVGAMFSCTECLVESYRGKSDWKNSVISGCITGGAIGFRAGLKAGALGCGGFAAFSAVIDYYLR.

Disulfide bonds link Cys61/Cys133 and Cys152/Cys171. Helical transmembrane passes span Ala66–Ile86, Tyr117–Val135, and Ala162–Asp182.

It belongs to the Tim17/Tim22/Tim23 family. Core component of the TIM22 complex.

The protein localises to the mitochondrion inner membrane. Its function is as follows. Essential core component of the TIM22 complex, a complex that mediates the import and insertion of multi-pass transmembrane proteins into the mitochondrial inner membrane. In the TIM22 complex, it constitutes the voltage-activated and signal-gated channel. Forms a twin-pore translocase that uses the membrane potential as external driving force in 2 voltage-dependent steps. This is Mitochondrial import inner membrane translocase subunit Tim22 (timm22) from Xenopus tropicalis (Western clawed frog).